A 166-amino-acid polypeptide reads, in one-letter code: MRDRPVTLAAITGAHGVAGEVRLKLFGEGVAALKRYRAFNDSGDGSGLTVVKIKDDGKGGAIARFAEVPDRTAAEKLRGTALTVRRSELPSLPEGEYYHADLIGLPAVSTEGEMLGECIAVENFGAGDVIEIRKADGKKFMVPMKTEAVPEWTDERIVIEAAYADQ.

The PRC barrel domain maps to 94–166 (EGEYYHADLI…IVIEAAYADQ (73 aa)).

It belongs to the RimM family. Binds ribosomal protein uS19.

It localises to the cytoplasm. In terms of biological role, an accessory protein needed during the final step in the assembly of 30S ribosomal subunit, possibly for assembly of the head region. Essential for efficient processing of 16S rRNA. May be needed both before and after RbfA during the maturation of 16S rRNA. It has affinity for free ribosomal 30S subunits but not for 70S ribosomes. The polypeptide is Ribosome maturation factor RimM (Novosphingobium aromaticivorans (strain ATCC 700278 / DSM 12444 / CCUG 56034 / CIP 105152 / NBRC 16084 / F199)).